We begin with the raw amino-acid sequence, 270 residues long: Aliphatic sulfonates import ATP-binding protein SsuB 3 (270 aa).

An ABC transporter domain is found at 17–238 (LAVRKLKKAF…VRGSHRLAAL (222 aa)). Position 49-56 (49-56 (GRSGCGKS)) interacts with ATP.

It belongs to the ABC transporter superfamily. Aliphatic sulfonates importer (TC 3.A.1.17.2) family. The complex is composed of two ATP-binding proteins (SsuB), two transmembrane proteins (SsuC) and a solute-binding protein (SsuA).

The protein localises to the cell inner membrane. The catalysed reaction is ATP + H2O + aliphatic sulfonate-[sulfonate-binding protein]Side 1 = ADP + phosphate + aliphatic sulfonateSide 2 + [sulfonate-binding protein]Side 1.. Part of the ABC transporter complex SsuABC involved in aliphatic sulfonates import. Responsible for energy coupling to the transport system. The protein is Aliphatic sulfonates import ATP-binding protein SsuB 3 of Pseudomonas syringae pv. syringae (strain B728a).